We begin with the raw amino-acid sequence, 214 residues long: MNKNMNGKFIVLEGLEGAGKTTARQAVVEQLNALGITDLLFTREPGGTPLAEKLRNLIKYETEEPVTDKAELLMLYAARIQLVENVIKPALAQGKWVIGDRHDLSSQAYQGGGRQIDSHLLETLKKTVLGDFEPDFTLYLDLSPAIGLARARGRGELDRIEQQNLAFFDRTRTRYLELVKDNPKAVIINAEQSIERVTADIKTAVKNWVNSISL.

14–21 (GLEGAGKT) is an ATP binding site.

This sequence belongs to the thymidylate kinase family.

The catalysed reaction is dTMP + ATP = dTDP + ADP. Functionally, phosphorylation of dTMP to form dTDP in both de novo and salvage pathways of dTTP synthesis. This chain is Thymidylate kinase, found in Mannheimia succiniciproducens (strain KCTC 0769BP / MBEL55E).